Reading from the N-terminus, the 474-residue chain is PRAME family member 2 (474 aa).

The stretch at 97–124 (RWKLQVLDLRDVDENFWARWPGAWALSC) is one LRR 1; degenerate repeat. One copy of the LRR 2; degenerate repeat lies at 179–203 (HLCCSKLVNYLTPIKYLRKSLKIIY). One copy of the LRR 3; degenerate repeat lies at 204–230 (INSIGELEIHNTCWPHLIRKLYCYLKE). The stretch at 231–265 (MKTLCKLVFSRCHHYTSDNELEGWLVTRFTSVFLR) is one LRR 4; degenerate repeat. 5 LRR repeats span residues 266–291 (LEHL…IRCL), 292–323 (QNPL…GYLK), 324–342 (HLNL…PLGA), 348–375 (AASL…GLSC), and 376–400 (CSQL…LLRH).

This sequence belongs to the PRAME family.

The polypeptide is PRAME family member 2 (Homo sapiens (Human)).